Here is a 311-residue protein sequence, read N- to C-terminus: Nucleotide-binding protein Acel_1111 (311 aa).

ATP is bound at residue 30–37; sequence GLSGAGRS. 81–84 serves as a coordination point for GTP; it reads DVRS.

It belongs to the RapZ-like family.

Functionally, displays ATPase and GTPase activities. The chain is Nucleotide-binding protein Acel_1111 from Acidothermus cellulolyticus (strain ATCC 43068 / DSM 8971 / 11B).